The following is a 99-amino-acid chain: MANVNIKPLEDKILVQINEAETTTASGLVIPDSAKEKPQEATVIAVGPGRFDDKGNRIPLDIKEDDVVIFSRYGGTEIKFGGVEYLLLSARDILAIVEK.

Belongs to the GroES chaperonin family. Heptamer of 7 subunits arranged in a ring. Interacts with the chaperonin GroEL.

It is found in the cytoplasm. Together with the chaperonin GroEL, plays an essential role in assisting protein folding. The GroEL-GroES system forms a nano-cage that allows encapsulation of the non-native substrate proteins and provides a physical environment optimized to promote and accelerate protein folding. GroES binds to the apical surface of the GroEL ring, thereby capping the opening of the GroEL channel. This Corynebacterium glutamicum (strain R) protein is Co-chaperonin GroES.